We begin with the raw amino-acid sequence, 631 residues long: Probable potassium transport system protein Kup (631 aa).

12 helical membrane-spanning segments follow: residues 17–37 (IGLL…SPLY), 56–76 (ILGV…FKYM), 109–129 (MMMV…SMIT), 147–167 (GLDH…FLIQ), 174–194 (IGVL…ALGV), 215–235 (FFII…LALT), 256–276 (WFIL…ALVL), 288–308 (LLAP…ATII), 346–366 (IYIG…VIGF), 378–398 (VAVT…MLML), 403–423 (PLLA…FFAA), and 428–448 (IFQG…LMTT).

Belongs to the HAK/KUP transporter (TC 2.A.72) family.

It localises to the cell inner membrane. The catalysed reaction is K(+)(in) + H(+)(in) = K(+)(out) + H(+)(out). Transport of potassium into the cell. Likely operates as a K(+):H(+) symporter. This is Probable potassium transport system protein Kup from Pseudomonas syringae pv. tomato (strain ATCC BAA-871 / DC3000).